The chain runs to 151 residues: 3-hydroxyacyl-[acyl-carrier-protein] dehydratase FabZ (151 aa).

His49 is an active-site residue.

It belongs to the thioester dehydratase family. FabZ subfamily.

The protein resides in the cytoplasm. The catalysed reaction is a (3R)-hydroxyacyl-[ACP] = a (2E)-enoyl-[ACP] + H2O. Involved in unsaturated fatty acids biosynthesis. Catalyzes the dehydration of short chain beta-hydroxyacyl-ACPs and long chain saturated and unsaturated beta-hydroxyacyl-ACPs. This chain is 3-hydroxyacyl-[acyl-carrier-protein] dehydratase FabZ, found in Bordetella petrii (strain ATCC BAA-461 / DSM 12804 / CCUG 43448).